Here is a 1073-residue protein sequence, read N- to C-terminus: Carbamoyl phosphate synthase large chain (1073 aa).

Residues 2-403 (PKRTDIKSIL…SLQKALRGLE (402 aa)) form a carboxyphosphate synthetic domain region. Residues Arg129, Arg169, Gly175, Gly176, Glu208, Leu210, Glu215, Gly241, Ile242, His243, Gln285, and Glu299 each contribute to the ATP site. The ATP-grasp 1 domain maps to 133 to 328 (DVAMKKIGLE…IAKVAAKLAV (196 aa)). Mg(2+) contacts are provided by Gln285, Glu299, and Asn301. Mn(2+)-binding residues include Gln285, Glu299, and Asn301. Residues 404–553 (VGATGFDPKV…YSTYEEECEA (150 aa)) form an oligomerization domain region. The tract at residues 554 to 936 (NPSTDREKIM…AFAKAQLGSN (383 aa)) is carbamoyl phosphate synthetic domain. In terms of domain architecture, ATP-grasp 2 spans 679–870 (QHAVERLKLK…LAKVAARVMA (192 aa)). Positions 715, 754, 756, 761, 786, 787, 788, 789, 829, and 841 each coordinate ATP. Positions 829, 841, and 843 each coordinate Mg(2+). Mn(2+)-binding residues include Gln829, Glu841, and Asn843. The MGS-like domain maps to 937 to 1073 (STMKKHGRAL…SVQEMHAQIK (137 aa)). The interval 937–1073 (STMKKHGRAL…SVQEMHAQIK (137 aa)) is allosteric domain.

It belongs to the CarB family. Composed of two chains; the small (or glutamine) chain promotes the hydrolysis of glutamine to ammonia, which is used by the large (or ammonia) chain to synthesize carbamoyl phosphate. Tetramer of heterodimers (alpha,beta)4. Mg(2+) serves as cofactor. The cofactor is Mn(2+).

It carries out the reaction hydrogencarbonate + L-glutamine + 2 ATP + H2O = carbamoyl phosphate + L-glutamate + 2 ADP + phosphate + 2 H(+). It catalyses the reaction hydrogencarbonate + NH4(+) + 2 ATP = carbamoyl phosphate + 2 ADP + phosphate + 2 H(+). The protein operates within amino-acid biosynthesis; L-arginine biosynthesis; carbamoyl phosphate from bicarbonate: step 1/1. It participates in pyrimidine metabolism; UMP biosynthesis via de novo pathway; (S)-dihydroorotate from bicarbonate: step 1/3. Its function is as follows. Large subunit of the glutamine-dependent carbamoyl phosphate synthetase (CPSase). CPSase catalyzes the formation of carbamoyl phosphate from the ammonia moiety of glutamine, carbonate, and phosphate donated by ATP, constituting the first step of 2 biosynthetic pathways, one leading to arginine and/or urea and the other to pyrimidine nucleotides. The large subunit (synthetase) binds the substrates ammonia (free or transferred from glutamine from the small subunit), hydrogencarbonate and ATP and carries out an ATP-coupled ligase reaction, activating hydrogencarbonate by forming carboxy phosphate which reacts with ammonia to form carbamoyl phosphate. In Escherichia coli (strain K12), this protein is Carbamoyl phosphate synthase large chain.